The chain runs to 374 residues: Putative glutamate--cysteine ligase 2 (374 aa).

Belongs to the glutamate--cysteine ligase type 2 family. YbdK subfamily.

It carries out the reaction L-cysteine + L-glutamate + ATP = gamma-L-glutamyl-L-cysteine + ADP + phosphate + H(+). Functionally, ATP-dependent carboxylate-amine ligase which exhibits weak glutamate--cysteine ligase activity. The chain is Putative glutamate--cysteine ligase 2 from Laribacter hongkongensis (strain HLHK9).